A 365-amino-acid chain; its full sequence is tRNA-specific 2-thiouridylase MnmA (365 aa).

Residues 6–13 (AMSGGVDS) and Met32 contribute to the ATP site. The Nucleophile role is filled by Cys101. Cys101 and Cys199 are disulfide-bonded. Residue Gly125 coordinates ATP. Positions 148 to 150 (KDQ) are interaction with tRNA. The active-site Cysteine persulfide intermediate is the Cys199.

The protein belongs to the MnmA/TRMU family.

Its subcellular location is the cytoplasm. The enzyme catalyses S-sulfanyl-L-cysteinyl-[protein] + uridine(34) in tRNA + AH2 + ATP = 2-thiouridine(34) in tRNA + L-cysteinyl-[protein] + A + AMP + diphosphate + H(+). Functionally, catalyzes the 2-thiolation of uridine at the wobble position (U34) of tRNA, leading to the formation of s(2)U34. This is tRNA-specific 2-thiouridylase MnmA from Kineococcus radiotolerans (strain ATCC BAA-149 / DSM 14245 / SRS30216).